Consider the following 586-residue polypeptide: uncharacterized protein (586 aa).

Residues 29 to 312 (YGIAIGSMVV…LARMRISLES (284 aa)) form the ABC transmembrane type-1 domain. The next 4 helical transmembrane spans lie at 30–50 (GIAI…AWIM), 66–86 (VFGV…ATYV), 162–184 (MVIQ…ILGV), and 256–276 (IMET…GVLV). In terms of domain architecture, ABC transporter spans 346–580 (IRFKDVNFSY…DGVYRRLYEL (235 aa)). Position 379–386 (379–386 (GPSGAGKS)) interacts with ATP.

Belongs to the ABC transporter superfamily.

It localises to the cell membrane. This is an uncharacterized protein from Sinorhizobium fredii (strain NBRC 101917 / NGR234).